The following is a 255-amino-acid chain: Proteasome subunit alpha type-3 (255 aa).

Serine 2 carries the N-acetylserine modification. Residues lysine 57, lysine 206, and lysine 230 each carry the N6-acetyllysine modification. 2 positions are modified to phosphoserine: serine 243 and serine 250.

Belongs to the peptidase T1A family. The 26S proteasome consists of a 20S proteasome core and two 19S regulatory subunits. The 20S proteasome core is a barrel-shaped complex made of 28 subunits that are arranged in four stacked rings. The two outer rings are each formed by seven alpha subunits, and the two inner rings are formed by seven beta subunits. The proteolytic activity is exerted by three beta-subunits PSMB5, PSMB6 and PSMB7. Interacts with AURKB. Interacts with CDKN1A. Interacts with MDM2 and RB1. Interacts with the C-terminus of TBXA2R isoform 2. Interacts with DNAJB2. As to expression, detected in liver (at protein level).

The protein localises to the cytoplasm. The protein resides in the nucleus. Component of the 20S core proteasome complex involved in the proteolytic degradation of most intracellular proteins. This complex plays numerous essential roles within the cell by associating with different regulatory particles. Associated with two 19S regulatory particles, forms the 26S proteasome and thus participates in the ATP-dependent degradation of ubiquitinated proteins. The 26S proteasome plays a key role in the maintenance of protein homeostasis by removing misfolded or damaged proteins that could impair cellular functions, and by removing proteins whose functions are no longer required. Associated with the PA200 or PA28, the 20S proteasome mediates ubiquitin-independent protein degradation. This type of proteolysis is required in several pathways including spermatogenesis (20S-PA200 complex) or generation of a subset of MHC class I-presented antigenic peptides (20S-PA28 complex). Binds to the C-terminus of CDKN1A and thereby mediates its degradation. Negatively regulates the membrane trafficking of the cell-surface thromboxane A2 receptor (TBXA2R) isoform 2. In Mus musculus (Mouse), this protein is Proteasome subunit alpha type-3 (Psma3).